Consider the following 422-residue polypeptide: UDP-N-acetylglucosamine 1-carboxyvinyltransferase (422 aa).

22–23 (KN) contributes to the phosphoenolpyruvate binding site. Residue arginine 93 participates in UDP-N-acetyl-alpha-D-glucosamine binding. Cysteine 117 serves as the catalytic Proton donor. Cysteine 117 carries the 2-(S-cysteinyl)pyruvic acid O-phosphothioketal modification. Residues 122–126 (RPVDQ), aspartate 305, and isoleucine 327 contribute to the UDP-N-acetyl-alpha-D-glucosamine site.

It belongs to the EPSP synthase family. MurA subfamily.

The protein resides in the cytoplasm. It catalyses the reaction phosphoenolpyruvate + UDP-N-acetyl-alpha-D-glucosamine = UDP-N-acetyl-3-O-(1-carboxyvinyl)-alpha-D-glucosamine + phosphate. Its pathway is cell wall biogenesis; peptidoglycan biosynthesis. Cell wall formation. Adds enolpyruvyl to UDP-N-acetylglucosamine. This chain is UDP-N-acetylglucosamine 1-carboxyvinyltransferase, found in Bordetella petrii (strain ATCC BAA-461 / DSM 12804 / CCUG 43448).